The primary structure comprises 384 residues: Chaperone protein DnaJ (384 aa).

The J domain maps to 5–70 (DYYEVLGVAR…QKKAAYDRFG (66 aa)). Residues 138 to 216 (GAQKTINVPG…CRGAGRVQKE (79 aa)) form a CR-type zinc finger. Zn(2+) is bound by residues C151, C154, C168, C171, C190, C193, C204, and C207. 4 CXXCXGXG motif repeats span residues 151–158 (CAACNGTG), 168–175 (CPTCSGMG), 190–197 (CPTCSGHG), and 204–211 (CQECRGAG). The tract at residues 300-322 (KVPPGTQSGKQLRLRGKGMPPLR) is disordered.

This sequence belongs to the DnaJ family. As to quaternary structure, homodimer. Zn(2+) is required as a cofactor.

The protein localises to the cytoplasm. In terms of biological role, participates actively in the response to hyperosmotic and heat shock by preventing the aggregation of stress-denatured proteins and by disaggregating proteins, also in an autonomous, DnaK-independent fashion. Unfolded proteins bind initially to DnaJ; upon interaction with the DnaJ-bound protein, DnaK hydrolyzes its bound ATP, resulting in the formation of a stable complex. GrpE releases ADP from DnaK; ATP binding to DnaK triggers the release of the substrate protein, thus completing the reaction cycle. Several rounds of ATP-dependent interactions between DnaJ, DnaK and GrpE are required for fully efficient folding. Also involved, together with DnaK and GrpE, in the DNA replication of plasmids through activation of initiation proteins. The chain is Chaperone protein DnaJ from Paracoccus denitrificans (strain Pd 1222).